A 252-amino-acid chain; its full sequence is MATGRTHRPATRSRGIPEATVARLPLYLRALTALSERSVPTVSSEELAAAAGVNSAKLRKDFSYLGSYGTRGVGYDVEYLVYQISRELGLTQDWPVVIVGIGNLGAALANYGGFASRGFRVAALIDADPAMAGKPVAGIPVQHTDELEKIIDGNGVSIGVIATPAGAAQQVCDRLVAAGVTSILNFAPTVLTVPDGVDVRKVDLSIELQILAFHEQRKAGEEAAAEGAIPAAASKESADKGPDGDVPAVMPA.

A DNA-binding region (H-T-H motif) is located at residues 26 to 65; that stretch reads LYLRALTALSERSVPTVSSEELAAAAGVNSAKLRKDFSYL. 100–105 lines the NAD(+) pocket; the sequence is GIGNLG. Residues 222 to 252 are disordered; it reads EAAAEGAIPAAASKESADKGPDGDVPAVMPA.

The protein belongs to the transcriptional regulatory Rex family. As to quaternary structure, homodimer.

The protein resides in the cytoplasm. Functionally, modulates transcription in response to changes in cellular NADH/NAD(+) redox state. The polypeptide is Redox-sensing transcriptional repressor Rex (Streptomyces avermitilis (strain ATCC 31267 / DSM 46492 / JCM 5070 / NBRC 14893 / NCIMB 12804 / NRRL 8165 / MA-4680)).